The following is a 132-amino-acid chain: Small ribosomal subunit protein uS8c (132 aa).

The protein belongs to the universal ribosomal protein uS8 family. As to quaternary structure, part of the 30S ribosomal subunit.

It localises to the plastid. The protein localises to the chloroplast. Its function is as follows. One of the primary rRNA binding proteins, it binds directly to 16S rRNA central domain where it helps coordinate assembly of the platform of the 30S subunit. The protein is Small ribosomal subunit protein uS8c (rps8) of Drimys granadensis.